Here is a 119-residue protein sequence, read N- to C-terminus: Large ribosomal subunit protein uL18 (119 aa).

A disordered region spans residues M1–T20. Over residues R9 to A19 the composition is skewed to basic residues.

This sequence belongs to the universal ribosomal protein uL18 family. Part of the 50S ribosomal subunit; part of the 5S rRNA/L5/L18/L25 subcomplex. Contacts the 5S and 23S rRNAs.

In terms of biological role, this is one of the proteins that bind and probably mediate the attachment of the 5S RNA into the large ribosomal subunit, where it forms part of the central protuberance. The sequence is that of Large ribosomal subunit protein uL18 from Chlorobaculum parvum (strain DSM 263 / NCIMB 8327) (Chlorobium vibrioforme subsp. thiosulfatophilum).